The sequence spans 271 residues: Interleukin-1 alpha (271 aa).

Residues M1–R112 constitute a propeptide that is removed on maturation. N6-acetyllysine is present on K82. Residues K82–L86 form a nuclear localization signal (NLS) region. Phosphoserine is present on S87. N102, N121, N137, N141, and N211 each carry an N-linked (GlcNAc...) asparagine glycan.

It belongs to the IL-1 family. In terms of assembly, monomer. Interacts with TMED10; the interaction mediates the translocation from the cytoplasm into the ERGIC (endoplasmic reticulum-Golgi intermediate compartment) and thereby secretion. Interacts with IL1R1. Interacts with S100A13; this interaction is the first step in the export of IL1A, followed by direct translocation of this complex across the plasma membrane. Acetylated within its nuclear localization sequence, which impacts subcellular localization. In terms of processing, proteolytic processed by CAPN1 in a calcium-dependent manner. Cleavage from 31 kDa precursor to 18 kDa biologically active molecules. Post-translationally, phosphorylated. Phosphorylation greatly enhances susceptibility to digestion and promotes the conversion of pre-IL1A alpha to the biologically active IL1A.

Its subcellular location is the nucleus. It localises to the cytoplasm. It is found in the secreted. Functionally, cytokine constitutively present intracellularly in nearly all resting non-hematopoietic cells that plays an important role in inflammation and bridges the innate and adaptive immune systems. After binding to its receptor IL1R1 together with its accessory protein IL1RAP, forms the high affinity interleukin-1 receptor complex. Signaling involves the recruitment of adapter molecules such as MYD88, IRAK1 or IRAK4. In turn, mediates the activation of NF-kappa-B and the three MAPK pathways p38, p42/p44 and JNK pathways. Within the cell, acts as an alarmin and cell death results in its liberation in the extracellular space after disruption of the cell membrane to induce inflammation and alert the host to injury or damage. In addition to its role as a danger signal, which occurs when the cytokine is passively released by cell necrosis, directly senses DNA damage and acts as signal for genotoxic stress without loss of cell integrity. The polypeptide is Interleukin-1 alpha (IL1A) (Macaca mulatta (Rhesus macaque)).